The following is a 567-amino-acid chain: Structural protein ORF567 (567 aa).

Positions 7–393 (INALLGFPEE…MPIEHKPEQQ (387 aa)) are disordered. Over residues 65 to 79 (TPTPIRPAPPPPPPI) the composition is skewed to pro residues. The span at 180–200 (PKREPEHHTHGSTNNEHESKR) shows a compositional bias: basic and acidic residues. Residues 219–231 (THQTSPSHSSGGT) show a composition bias toward low complexity. Pro residues-rich tracts occupy residues 253–278 (MPIPPNPPIVREPTPTPQPTPIPTPP) and 285–299 (TPTPPRTPQPTPPPT). Over residues 300 to 312 (HGSSSTNSSGSTN) the composition is skewed to low complexity. Residues 319 to 335 (PKPIPIPPTPPPPPPHH) are compositionally biased toward pro residues. The segment covering 343–353 (PKHESEHHDHG) has biased composition (basic and acidic residues). The segment covering 354–372 (SSSTNSSSSTSNSSSGGTN) has biased composition (low complexity).

The protein resides in the virion. In Acidianus two-tailed virus (ATV), this protein is Structural protein ORF567.